The sequence spans 380 residues: Sialidase-2 (380 aa).

The FRIP motif signature appears at 20–23 (YRIP). Residues arginine 21 and arginine 41 each contribute to the substrate site. Residue aspartate 46 is the Proton acceptor of the active site. One copy of the BNR 1 repeat lies at 127–138 (VTSTDHGRTWSS). 2 residues coordinate substrate: tyrosine 179 and tyrosine 181. Residues 197–208 (FLSHDHGRTWAR) form a BNR 2 repeat. Substrate contacts are provided by glutamate 218, arginine 237, and arginine 304. Catalysis depends on tyrosine 334, which acts as the Nucleophile. Glutamate 355 is a catalytic residue.

Belongs to the glycosyl hydrolase 33 family. In terms of tissue distribution, expressed in skeletal muscle, fetal liver and embryonic carcinoma cell line NT2-D1.

It is found in the cytoplasm. The protein localises to the cytosol. The enzyme catalyses Hydrolysis of alpha-(2-&gt;3)-, alpha-(2-&gt;6)-, alpha-(2-&gt;8)- glycosidic linkages of terminal sialic acid residues in oligosaccharides, glycoproteins, glycolipids, colominic acid and synthetic substrates.. The catalysed reaction is a ganglioside GD1a + H2O = a ganglioside GM1 + N-acetylneuraminate. It carries out the reaction a ganglioside GM1 + H2O = a ganglioside GA1 + N-acetylneuraminate. It catalyses the reaction a ganglioside GT1b + H2O = a ganglioside GD1b + N-acetylneuraminate. The enzyme catalyses a ganglioside GD1b + H2O = a ganglioside GM1 + N-acetylneuraminate. The catalysed reaction is a ganglioside GD3 + H2O = a ganglioside GM3 + N-acetylneuraminate. It carries out the reaction a ganglioside GM3 + H2O = a beta-D-galactosyl-(1-&gt;4)-beta-D-glucosyl-(1&lt;-&gt;1)-ceramide + N-acetylneuraminate. It catalyses the reaction a ganglioside GM2 + H2O = a ganglioside GA2 + N-acetylneuraminate. The enzyme catalyses a neolactoside IV(3)-alpha-NeuAc-nLc4Cer(d18:1(4E)) + H2O = a neolactoside nLc4Cer(d18:1(4E)) + N-acetylneuraminate. The catalysed reaction is N-acetyl-alpha-neuraminosyl-(2-&gt;3)-beta-D-galactosyl-(1-&gt;4)-D-glucose + H2O = lactose + N-acetylneuraminate. Functionally, exo-alpha-sialidase that catalyzes the hydrolytic cleavage of the terminal sialic acid (N-acetylneuraminic acid, Neu5Ac) of a glycan moiety in the catabolism of glycolipids, glycoproteins and oligosacharides. Recognizes sialyl linkage positions of the glycan moiety as well as the supramolecular organization of the sialoglycoconjugate. Displays preference for alpha-(2-&gt;3)-sialylated GD1a and GT1B gangliosides over alpha-(2-&gt;8)-sialylated GD1b, in both monomeric forms and micelles. Hydrolyzes monomeric GM1 ganglioside, but has no activity toward the miscellar form. Has lower sialidase activity for glycoproteins such as fetuin and TF/transferrin that carry a mixture of alpha-(2-&gt;3) and alpha-(2-&gt;6)-sialyl linkages. Cleaves milk oligosaccharide alpha-(2-&gt;3)-sialyllactose, but is inactive toward alpha-(2-&gt;6)-sialyllactose isomer. Has no activity toward colominic acid, a homomer of alpha-(2-&gt;8)-linked Neu5Ac residues. The polypeptide is Sialidase-2 (NEU2) (Homo sapiens (Human)).